The primary structure comprises 319 residues: Cobalamin biosynthesis protein CbiB (319 aa).

The next 5 helical transmembrane spans lie at 56-76 (VMWVVVVGATWGVAWGVLALA), 82-102 (WFGWSVEVWMIFTTLAGRSLA), 153-173 (VDGIIAPLFFLFLGGAPLAMA), 204-224 (VANYLPARLSWLLLGIAAGLC), and 296-316 (LMWVASTLALALFIAARCGLS).

This sequence belongs to the CobD/CbiB family.

The protein resides in the cell membrane. It participates in cofactor biosynthesis; adenosylcobalamin biosynthesis. Functionally, converts cobyric acid to cobinamide by the addition of aminopropanol on the F carboxylic group. However, the true cosubstrate could be (R)-1-amino-2-propanol O-2-phosphate, leading to cobinamide phosphate. This Salmonella choleraesuis (strain SC-B67) protein is Cobalamin biosynthesis protein CbiB.